Consider the following 211-residue polypeptide: Small ribosomal subunit protein uS4 (211 aa).

A disordered region spans residues 27-48; that stretch reads GRKVLERRGSQPPGQHGASVRR. An S4 RNA-binding domain is found at 99 to 162; it reads RRLDNVVFRL…RKRDYFKDLE (64 aa).

It belongs to the universal ribosomal protein uS4 family. Part of the 30S ribosomal subunit. Contacts protein S5. The interaction surface between S4 and S5 is involved in control of translational fidelity.

Its function is as follows. One of the primary rRNA binding proteins, it binds directly to 16S rRNA where it nucleates assembly of the body of the 30S subunit. Functionally, with S5 and S12 plays an important role in translational accuracy. The polypeptide is Small ribosomal subunit protein uS4 (Herpetosiphon aurantiacus (strain ATCC 23779 / DSM 785 / 114-95)).